The following is a 165-amino-acid chain: SsrA-binding protein (165 aa).

Over residues 135-158 (QAHDKRQDMARRDAQREVTRELGR) the composition is skewed to basic and acidic residues. Positions 135–165 (QAHDKRQDMARRDAQREVTRELGRRVKGMTN) are disordered.

This sequence belongs to the SmpB family.

The protein resides in the cytoplasm. Functionally, required for rescue of stalled ribosomes mediated by trans-translation. Binds to transfer-messenger RNA (tmRNA), required for stable association of tmRNA with ribosomes. tmRNA and SmpB together mimic tRNA shape, replacing the anticodon stem-loop with SmpB. tmRNA is encoded by the ssrA gene; the 2 termini fold to resemble tRNA(Ala) and it encodes a 'tag peptide', a short internal open reading frame. During trans-translation Ala-aminoacylated tmRNA acts like a tRNA, entering the A-site of stalled ribosomes, displacing the stalled mRNA. The ribosome then switches to translate the ORF on the tmRNA; the nascent peptide is terminated with the 'tag peptide' encoded by the tmRNA and targeted for degradation. The ribosome is freed to recommence translation, which seems to be the essential function of trans-translation. The protein is SsrA-binding protein of Mycolicibacterium gilvum (strain PYR-GCK) (Mycobacterium gilvum (strain PYR-GCK)).